A 356-amino-acid chain; its full sequence is MKREILLERIDKLKQLMPWYVLEYYQSKLAVPYSFTTLYEYLKEYDRFFSWVLESGISNADKISDIPLSVLENMSKKDMESFILYLRERPLLNANTTKQGVSQTTINRTLSALSSLYKYLTEEVENDQGEPYFYRNVMKKVSTKKKKETLAARAENIKQKLFLGDETEGFLTYIDQEHPQQLSNRALSSFNKNKERDLAIIALLLASGVRLSEAVNLDLRDLNLKMMVIDVTRKGCKRDSVNVAAFAKPYLENYLAIRNQRYKTEKTDTALFLTLYRGVPNRIDASSVEKMVAKYSEDFKVRVTPHKLRHTLATRLYDATKSQVLVSHQLGHASTQVTDLYTHIVSDEQKNALDSL.

The 106-residue stretch at 16–121 folds into the Core-binding (CB) domain; it reads LMPWYVLEYY…ALSSLYKYLT (106 aa). Positions 169–354 constitute a Tyr recombinase domain; the sequence is GFLTYIDQEH…VSDEQKNALD (186 aa). Residues arginine 210, lysine 234, histidine 306, arginine 309, and histidine 332 contribute to the active site. The O-(3'-phospho-DNA)-tyrosine intermediate role is filled by tyrosine 341.

It belongs to the 'phage' integrase family. XerS subfamily.

It localises to the cytoplasm. FtsK is required for recombination. Functionally, site-specific tyrosine recombinase, which acts by catalyzing the cutting and rejoining of the recombining DNA molecules. Essential to convert dimers of the bacterial chromosome into monomers to permit their segregation at cell division. This Streptococcus pneumoniae serotype 4 (strain ATCC BAA-334 / TIGR4) protein is Tyrosine recombinase XerS.